Consider the following 586-residue polypeptide: Frizzled-10-A (586 aa).

Residues 1–26 (MDVSGVTGLLRGTALLLVLAAALCSA) form the signal peptide. The Extracellular segment spans residues 27–230 (ISSINPDRSG…DVYWSKDDKK (204 aa)). One can recognise an FZ domain in the interval 35–156 (SGDGRCQAIE…NDPNYLCMEA (122 aa)). 5 disulfide bridges follow: cysteine 40/cysteine 101, cysteine 48/cysteine 94, cysteine 85/cysteine 123, cysteine 112/cysteine 153, and cysteine 116/cysteine 140. Asparagine 54 is a glycosylation site (N-linked (GlcNAc...) asparagine). Residue asparagine 159 is glycosylated (N-linked (GlcNAc...) asparagine). Positions 161–199 (TDETPRGSSMLPPIFRPQRPSSGHEIYPKDPTSRSSCEN) are disordered. Residues 231–251 (FAFIWIAIWSILCFFSSAFTV) form a helical membrane-spanning segment. Topologically, residues 252 to 267 (LTFLVDPLRFKYPERP) are cytoplasmic. The helical transmembrane segment at 268–288 (IIFLSMCYCVYSVGYIIRLFA) threads the bilayer. Residues 289–315 (GADSIACDRDSGQLYVIQEGLESTGCT) lie on the Extracellular side of the membrane. Residues 316-336 (IVFLILYYFGMASSLWWVILT) form a helical membrane-spanning segment. At 337 to 356 (LTWFLAAGKKWGHEAIEANS) the chain is on the cytoplasmic side. A helical transmembrane segment spans residues 357-377 (SYFHLAAWAIPAVKTIMILVM). The Extracellular portion of the chain corresponds to 378–401 (RRVAGDELTGVCYVGSMDVNALTG). A helical membrane pass occupies residues 402–422 (FVLIPLACYLIIGTSFILSGF). Residues 423–448 (VALFHIRRVMKTGGENTDKLEKLMVR) lie on the Cytoplasmic side of the membrane. A helical transmembrane segment spans residues 449-469 (IGVFSVLYTVPATCVIACYFY). Over 470–507 (ERLNMDFWKILATQDKCKMDSQTKTLDCTMTSSIPAVE) the chain is Extracellular. Residues 508–528 (IFMVKIFMLLVVGITSGMWIW) form a helical membrane-spanning segment. Topologically, residues 529–586 (TSKTVQSWQNVFSKRLKKRNRSKPASVITSAGIYKKPQHPPKVHHGKYESALQSPTCV) are cytoplasmic. The short motif at 531–536 (KTVQSW) is the Lys-Thr-X-X-X-Trp motif, mediates interaction with the PDZ domain of Dvl family members element. Residues 563–586 (KKPQHPPKVHHGKYESALQSPTCV) form a disordered region. Basic residues predominate over residues 564–573 (KPQHPPKVHH). Residues 584-586 (TCV) carry the PDZ-binding motif.

This sequence belongs to the G-protein coupled receptor Fz/Smo family. As to expression, expressed in liver, lung, brain, testis, stomach, kidney, eye, skeletal muscle and skin.

It is found in the cell membrane. Its function is as follows. Receptor for Wnt proteins. Most of frizzled receptors are coupled to the beta-catenin canonical signaling pathway, which leads to the activation of disheveled proteins, inhibition of GSK-3 kinase, nuclear accumulation of beta-catenin and activation of Wnt target genes. A second signaling pathway involving PKC and calcium fluxes has been seen for some family members, but it is not yet clear if it represents a distinct pathway or if it can be integrated in the canonical pathway, as PKC seems to be required for Wnt-mediated inactivation of GSK-3 kinase. Both pathways seem to involve interactions with G-proteins. May be involved in transduction and intercellular transmission of polarity information during tissue morphogenesis and/or in differentiated tissues. Activated by Wnt8. Could have an antagonizing activity in the morphogenesis during development. The sequence is that of Frizzled-10-A (fzd10-a) from Xenopus laevis (African clawed frog).